A 328-amino-acid chain; its full sequence is Malate dehydrogenase (328 aa).

Position 11 to 17 (G11 to G17) interacts with NAD(+). Residues R94 and R100 each coordinate substrate. Residues N107, Q114, and V131 to N133 each bind NAD(+). The substrate site is built by N133 and R164. H189 functions as the Proton acceptor in the catalytic mechanism.

This sequence belongs to the LDH/MDH superfamily. MDH type 2 family.

The enzyme catalyses (S)-malate + NAD(+) = oxaloacetate + NADH + H(+). Functionally, catalyzes the reversible oxidation of malate to oxaloacetate. The chain is Malate dehydrogenase from Acinetobacter baumannii (strain AB0057).